Here is a 218-residue protein sequence, read N- to C-terminus: Thiopurine S-methyltransferase (218 aa).

S-adenosyl-L-methionine contacts are provided by Trp10, Leu45, Glu66, and Arg123.

This sequence belongs to the class I-like SAM-binding methyltransferase superfamily. TPMT family.

The protein localises to the cytoplasm. It carries out the reaction S-adenosyl-L-methionine + a thiopurine = S-adenosyl-L-homocysteine + a thiopurine S-methylether.. In Pseudomonas aeruginosa (strain LESB58), this protein is Thiopurine S-methyltransferase.